The following is a 459-amino-acid chain: NADH-ubiquinone oxidoreductase chain 4 (459 aa).

A run of 13 helical transmembrane segments spans residues 22–42 (HLSYTTLLFSFTIALLSLQWL), 61–81 (PISTPLLILTSWMTPLMILVS), 94–113 (RTFTTTIISLQISLTLAFSA), 114–134 (LEMMLFFTMFEATLIPTLIII), 146–166 (AGTYFLFYTLIGSLPLLIALT), 197–217 (WFALLMAFMIKMPLYGLHLWL), 225–245 (PIAGSMILAGVLLKLGGYGII), 258–278 (LSYPFMTLSLWGIIMTGLICL), 285–304 (SLIAYSSVGLMGLVISAALL), 308–330 (LSITGAIILMIAHGLSSSMLFCL), 352–372 (LLPLMTIWWLLASLMNMALPP), 380–400 (LTIIASLFSWANITIILTGLG), and 437–457 (LIMMLHMVPLILLMMKPQLMT).

Belongs to the complex I subunit 4 family.

Its subcellular location is the mitochondrion membrane. It carries out the reaction a ubiquinone + NADH + 5 H(+)(in) = a ubiquinol + NAD(+) + 4 H(+)(out). Core subunit of the mitochondrial membrane respiratory chain NADH dehydrogenase (Complex I) that is believed to belong to the minimal assembly required for catalysis. Complex I functions in the transfer of electrons from NADH to the respiratory chain. The immediate electron acceptor for the enzyme is believed to be ubiquinone. This is NADH-ubiquinone oxidoreductase chain 4 (MT-ND4) from Pelomedusa subrufa (African side-necked turtle).